The following is a 354-amino-acid chain: Neuronal growth regulator 1 (354 aa).

The N-terminal stretch at 1-37 (MDMMLLVQGACCSNQWLAAVLLSLCCLLPSCLPAGQS) is a signal peptide. Ig-like C2-type domains are found at residues 38-134 (VDFP…VHLT), 139-221 (PKIY…KVVV), and 225-313 (PTIQ…LPLN). Cys-60 and Cys-118 form a disulfide bridge. 2 N-linked (GlcNAc...) asparagine glycosylation sites follow: Asn-73 and Asn-155. Intrachain disulfides connect Cys-160-Cys-203 and Cys-245-Cys-297. Tyr-187 is subject to Phosphotyrosine. Asn-275, Asn-286, Asn-294, and Asn-307 each carry an N-linked (GlcNAc...) asparagine glycan. Gly-324 is lipidated: GPI-anchor amidated glycine. A propeptide spans 325-354 (SADVLFSCWYLVLTLSSFTSIFYLKNAILQ) (removed in mature form).

It belongs to the immunoglobulin superfamily. IgLON family.

The protein localises to the cell membrane. Its function is as follows. May be involved in cell-adhesion. May function as a trans-neural growth-promoting factor in regenerative axon sprouting in the mammalian brain. The sequence is that of Neuronal growth regulator 1 (NEGR1) from Pongo abelii (Sumatran orangutan).